A 550-amino-acid polypeptide reads, in one-letter code: Hydroxylamine reductase (550 aa).

[2Fe-2S] cluster-binding residues include cysteine 3, cysteine 6, cysteine 18, and cysteine 25. Residues histidine 249, glutamate 273, cysteine 317, cysteine 405, cysteine 433, cysteine 458, glutamate 492, and lysine 494 each contribute to the hybrid [4Fe-2O-2S] cluster site. Cysteine 405 is subject to Cysteine persulfide.

It belongs to the HCP family. [2Fe-2S] cluster serves as cofactor. The cofactor is hybrid [4Fe-2O-2S] cluster.

Its subcellular location is the cytoplasm. The catalysed reaction is A + NH4(+) + H2O = hydroxylamine + AH2 + H(+). Its function is as follows. Catalyzes the reduction of hydroxylamine to form NH(3) and H(2)O. The polypeptide is Hydroxylamine reductase (Escherichia coli O6:K15:H31 (strain 536 / UPEC)).